The primary structure comprises 232 residues: Phosphatidylserine decarboxylase proenzyme (232 aa).

The Schiff-base intermediate with substrate; via pyruvic acid role is filled by serine 190. A Pyruvic acid (Ser); by autocatalysis modification is found at serine 190.

It belongs to the phosphatidylserine decarboxylase family. PSD-A subfamily. As to quaternary structure, heterodimer of a large membrane-associated beta subunit and a small pyruvoyl-containing alpha subunit. The cofactor is pyruvate. Post-translationally, is synthesized initially as an inactive proenzyme. Formation of the active enzyme involves a self-maturation process in which the active site pyruvoyl group is generated from an internal serine residue via an autocatalytic post-translational modification. Two non-identical subunits are generated from the proenzyme in this reaction, and the pyruvate is formed at the N-terminus of the alpha chain, which is derived from the carboxyl end of the proenzyme. The post-translation cleavage follows an unusual pathway, termed non-hydrolytic serinolysis, in which the side chain hydroxyl group of the serine supplies its oxygen atom to form the C-terminus of the beta chain, while the remainder of the serine residue undergoes an oxidative deamination to produce ammonia and the pyruvoyl prosthetic group on the alpha chain.

It localises to the cell membrane. It carries out the reaction a 1,2-diacyl-sn-glycero-3-phospho-L-serine + H(+) = a 1,2-diacyl-sn-glycero-3-phosphoethanolamine + CO2. It functions in the pathway phospholipid metabolism; phosphatidylethanolamine biosynthesis; phosphatidylethanolamine from CDP-diacylglycerol: step 2/2. Its function is as follows. Catalyzes the formation of phosphatidylethanolamine (PtdEtn) from phosphatidylserine (PtdSer). The sequence is that of Phosphatidylserine decarboxylase proenzyme from Rhizobium leguminosarum bv. trifolii (strain WSM2304).